The following is a 252-amino-acid chain: Imidazole glycerol phosphate synthase subunit HisF (252 aa).

Active-site residues include D11 and D130.

This sequence belongs to the HisA/HisF family. In terms of assembly, heterodimer of HisH and HisF.

The protein resides in the cytoplasm. It catalyses the reaction 5-[(5-phospho-1-deoxy-D-ribulos-1-ylimino)methylamino]-1-(5-phospho-beta-D-ribosyl)imidazole-4-carboxamide + L-glutamine = D-erythro-1-(imidazol-4-yl)glycerol 3-phosphate + 5-amino-1-(5-phospho-beta-D-ribosyl)imidazole-4-carboxamide + L-glutamate + H(+). It participates in amino-acid biosynthesis; L-histidine biosynthesis; L-histidine from 5-phospho-alpha-D-ribose 1-diphosphate: step 5/9. IGPS catalyzes the conversion of PRFAR and glutamine to IGP, AICAR and glutamate. The HisF subunit catalyzes the cyclization activity that produces IGP and AICAR from PRFAR using the ammonia provided by the HisH subunit. The protein is Imidazole glycerol phosphate synthase subunit HisF of Geobacillus kaustophilus (strain HTA426).